A 317-amino-acid polypeptide reads, in one-letter code: uncharacterized protein (317 aa).

7 helical membrane-spanning segments follow: residues 24 to 44 (ISII…TGIM), 63 to 83 (LSIS…SILA), 136 to 156 (LGVA…ISED), 187 to 207 (LIPI…IGFF), 229 to 249 (ILAL…GGFL), 252 to 272 (GILS…LTFS), and 295 to 315 (IVMV…AGLL).

The protein to M.jannaschii MJ0880, MJ1556 and MJ1589.

The protein localises to the cell membrane. This is an uncharacterized protein from Methanocaldococcus jannaschii (strain ATCC 43067 / DSM 2661 / JAL-1 / JCM 10045 / NBRC 100440) (Methanococcus jannaschii).